The primary structure comprises 89 residues: Small ribosomal subunit protein uS15 (89 aa).

This sequence belongs to the universal ribosomal protein uS15 family. Part of the 30S ribosomal subunit. Forms a bridge to the 50S subunit in the 70S ribosome, contacting the 23S rRNA.

In terms of biological role, one of the primary rRNA binding proteins, it binds directly to 16S rRNA where it helps nucleate assembly of the platform of the 30S subunit by binding and bridging several RNA helices of the 16S rRNA. Functionally, forms an intersubunit bridge (bridge B4) with the 23S rRNA of the 50S subunit in the ribosome. The protein is Small ribosomal subunit protein uS15 of Yersinia pseudotuberculosis serotype O:1b (strain IP 31758).